The chain runs to 995 residues: uncharacterized protein (995 aa).

The signal sequence occupies residues 1–30 (MFIHRMKSNLASLFLSFFLLLACEFTFSYA). N-linked (GlcNAc...) asparagine glycans are attached at residues asparagine 115, asparagine 162, asparagine 225, asparagine 422, asparagine 478, and asparagine 486. Residue glutamate 502 is part of the active site. N-linked (GlcNAc...) asparagine glycans are attached at residues asparagine 546 and asparagine 611. The Proton donor role is filled by aspartate 669. Residues asparagine 670, asparagine 823, asparagine 843, and asparagine 986 are each glycosylated (N-linked (GlcNAc...) asparagine).

It belongs to the glycosyl hydrolase 31 family.

The protein resides in the spore wall. This is an uncharacterized protein from Schizosaccharomyces pombe (strain 972 / ATCC 24843) (Fission yeast).